Here is a 396-residue protein sequence, read N- to C-terminus: CCA-adding enzyme (396 aa).

The ATP site is built by Gly-27 and Arg-30. Residues Gly-27 and Arg-30 each contribute to the CTP site. 2 residues coordinate Mg(2+): Asp-40 and Asp-42. Positions 111, 154, 157, 160, and 163 each coordinate ATP. Residues Arg-111, Asp-154, Arg-157, Arg-160, and Arg-163 each contribute to the CTP site.

Belongs to the tRNA nucleotidyltransferase/poly(A) polymerase family. Bacterial CCA-adding enzyme type 3 subfamily. In terms of assembly, homodimer. Mg(2+) is required as a cofactor.

It catalyses the reaction a tRNA precursor + 2 CTP + ATP = a tRNA with a 3' CCA end + 3 diphosphate. The catalysed reaction is a tRNA with a 3' CCA end + 2 CTP + ATP = a tRNA with a 3' CCACCA end + 3 diphosphate. Functionally, catalyzes the addition and repair of the essential 3'-terminal CCA sequence in tRNAs without using a nucleic acid template. Adds these three nucleotides in the order of C, C, and A to the tRNA nucleotide-73, using CTP and ATP as substrates and producing inorganic pyrophosphate. tRNA 3'-terminal CCA addition is required both for tRNA processing and repair. Also involved in tRNA surveillance by mediating tandem CCA addition to generate a CCACCA at the 3' terminus of unstable tRNAs. While stable tRNAs receive only 3'-terminal CCA, unstable tRNAs are marked with CCACCA and rapidly degraded. This chain is CCA-adding enzyme, found in Pediococcus pentosaceus (strain ATCC 25745 / CCUG 21536 / LMG 10740 / 183-1w).